Reading from the N-terminus, the 35-residue chain is Kappa-theraphotoxin-Tb1b (35 aa).

Intrachain disulfides connect cysteine 3-cysteine 18, cysteine 10-cysteine 23, and cysteine 17-cysteine 30.

This sequence belongs to the neurotoxin 10 (Hwtx-1) family. 58 subfamily. In terms of assembly, monomer. As to expression, expressed by the venom gland.

It is found in the secreted. Functionally, low-affinity blocker of Kv4.2/KCND2 voltage-gated potassium channels. Is presumed to shift the voltage-dependence of channel activation to more depolarized potentials and to bind to the S3-S4 linker region of the voltage sensor domain. The chain is Kappa-theraphotoxin-Tb1b from Theraphosa blondi (Goliath birdeating spider).